Consider the following 687-residue polypeptide: Glycine--tRNA ligase beta subunit (687 aa).

This sequence belongs to the class-II aminoacyl-tRNA synthetase family. In terms of assembly, tetramer of two alpha and two beta subunits.

Its subcellular location is the cytoplasm. It carries out the reaction tRNA(Gly) + glycine + ATP = glycyl-tRNA(Gly) + AMP + diphosphate. This is Glycine--tRNA ligase beta subunit from Neisseria gonorrhoeae (strain ATCC 700825 / FA 1090).